A 276-amino-acid polypeptide reads, in one-letter code: NADPH-dependent 7-cyano-7-deazaguanine reductase (276 aa).

83 to 85 (IES) is a substrate binding site. 85–86 (SK) lines the NADPH pocket. The active-site Thioimide intermediate is the cysteine 184. Catalysis depends on aspartate 191, which acts as the Proton donor. 223 to 224 (HE) serves as a coordination point for substrate. 252–253 (RG) contacts NADPH.

Belongs to the GTP cyclohydrolase I family. QueF type 2 subfamily. In terms of assembly, homodimer.

The protein localises to the cytoplasm. It carries out the reaction 7-aminomethyl-7-carbaguanine + 2 NADP(+) = 7-cyano-7-deazaguanine + 2 NADPH + 3 H(+). Its pathway is tRNA modification; tRNA-queuosine biosynthesis. In terms of biological role, catalyzes the NADPH-dependent reduction of 7-cyano-7-deazaguanine (preQ0) to 7-aminomethyl-7-deazaguanine (preQ1). The chain is NADPH-dependent 7-cyano-7-deazaguanine reductase from Pseudomonas syringae pv. tomato (strain ATCC BAA-871 / DC3000).